The sequence spans 186 residues: Large ribosomal subunit protein uL5 (186 aa).

This sequence belongs to the universal ribosomal protein uL5 family. In terms of assembly, part of the 50S ribosomal subunit; part of the 5S rRNA/L5/L18/L25 subcomplex. Contacts the 5S rRNA and the P site tRNA. Forms a bridge to the 30S subunit in the 70S ribosome.

Its function is as follows. This is one of the proteins that bind and probably mediate the attachment of the 5S RNA into the large ribosomal subunit, where it forms part of the central protuberance. In the 70S ribosome it contacts protein S13 of the 30S subunit (bridge B1b), connecting the 2 subunits; this bridge is implicated in subunit movement. Contacts the P site tRNA; the 5S rRNA and some of its associated proteins might help stabilize positioning of ribosome-bound tRNAs. This Legionella pneumophila subsp. pneumophila (strain Philadelphia 1 / ATCC 33152 / DSM 7513) protein is Large ribosomal subunit protein uL5.